Here is a 499-residue protein sequence, read N- to C-terminus: Protein NODULATION SIGNALING PATHWAY 2 (499 aa).

Residues N64–A106 form a disordered region. Positions T88–E104 are enriched in low complexity. Residues A106 to T491 form the GRAS domain. The segment at L113–K182 is leucine repeat I (LRI). Positions F201–A265 are VHIID. Positions V232–D236 match the VHIID motif. The segment at E281–A313 is leucine repeat II (LRII). The segment at L323 to G414 is PFYRE. Positions A417–T491 are SAW.

This sequence belongs to the GRAS family. As to quaternary structure, interacts with IPN2. Binds to RAD1. Interacts with RAM1. As to expression, highly expressed in roots.

The protein resides in the nucleus membrane. Its subcellular location is the endoplasmic reticulum. In terms of biological role, transcriptional regulator essential for Nod-factor-induced gene expression. Acts downstream of calcium spiking and a calcium/calmodulin-dependent protein kinase required for activation of early nodulation gene expression. Transcription factor involved in the induction of NIN and ENOD40 genes, which are required for rhizobial infection and early nodule development. Does not seem to contribute to the early steps of the arbuscular mycorrhizal fungus infection and colonization processes in roots. Transcription factor involved in the positive regulation of the beta-carotene isomerase D27, which participates in a pathway leading to biosynthesis of strigolactones in roots. The sequence is that of Protein NODULATION SIGNALING PATHWAY 2 from Lotus japonicus (Lotus corniculatus var. japonicus).